Consider the following 306-residue polypeptide: Aspartate carbamoyltransferase catalytic subunit (306 aa).

Carbamoyl phosphate contacts are provided by Arg53 and Thr54. Lys82 serves as a coordination point for L-aspartate. Carbamoyl phosphate is bound by residues Arg103, His131, and Gln134. The L-aspartate site is built by Arg164 and Arg226. Residues Leu263 and Pro264 each contribute to the carbamoyl phosphate site.

The protein belongs to the aspartate/ornithine carbamoyltransferase superfamily. ATCase family. Heterododecamer (2C3:3R2) of six catalytic PyrB chains organized as two trimers (C3), and six regulatory PyrI chains organized as three dimers (R2).

It catalyses the reaction carbamoyl phosphate + L-aspartate = N-carbamoyl-L-aspartate + phosphate + H(+). It participates in pyrimidine metabolism; UMP biosynthesis via de novo pathway; (S)-dihydroorotate from bicarbonate: step 2/3. Functionally, catalyzes the condensation of carbamoyl phosphate and aspartate to form carbamoyl aspartate and inorganic phosphate, the committed step in the de novo pyrimidine nucleotide biosynthesis pathway. This chain is Aspartate carbamoyltransferase catalytic subunit, found in Methanocaldococcus jannaschii (strain ATCC 43067 / DSM 2661 / JAL-1 / JCM 10045 / NBRC 100440) (Methanococcus jannaschii).